A 135-amino-acid polypeptide reads, in one-letter code: Transcription antitermination protein NusB (135 aa).

Belongs to the NusB family.

Its function is as follows. Involved in transcription antitermination. Required for transcription of ribosomal RNA (rRNA) genes. Binds specifically to the boxA antiterminator sequence of the ribosomal RNA (rrn) operons. This Nocardioides sp. (strain ATCC BAA-499 / JS614) protein is Transcription antitermination protein NusB.